The primary structure comprises 106 residues: Urease subunit beta (106 aa).

The protein belongs to the urease beta subunit family. As to quaternary structure, heterotrimer of UreA (gamma), UreB (beta) and UreC (alpha) subunits. Three heterotrimers associate to form the active enzyme.

It is found in the cytoplasm. The catalysed reaction is urea + 2 H2O + H(+) = hydrogencarbonate + 2 NH4(+). The protein operates within nitrogen metabolism; urea degradation; CO(2) and NH(3) from urea (urease route): step 1/1. The protein is Urease subunit beta of Synechococcus sp. (strain CC9311).